A 261-amino-acid polypeptide reads, in one-letter code: Chloroplastic import inner membrane translocase subunit HP30-1 (261 aa).

A run of 4 helical transmembrane segments spans residues 59 to 77 (AAVV…GGLM), 113 to 129 (NFAA…SVMK), 139 to 155 (SAVV…SLVS), and 163 to 180 (MNAI…GVFF).

Belongs to the Tim17/Tim22/Tim23 family. In terms of assembly, probable component of a protein-conducting channel made of HP30-1, HP30-2 and HP20 that mediates the import of transit sequence-less proteins into the chloroplastic inner membrane. Interacts with CEQORH.

Its subcellular location is the plastid. The protein localises to the chloroplast inner membrane. In terms of biological role, together with HP30-2 and HP20, triggers the import and insertion of transit sequence-less multi-pass transmembrane proteins (e.g. CEQORH) into the chloroplastic inner membrane. The polypeptide is Chloroplastic import inner membrane translocase subunit HP30-1 (Arabidopsis thaliana (Mouse-ear cress)).